The chain runs to 163 residues: Intron-encoded endonuclease I-PpoI (163 aa).

Homodimer. Zn(2+) serves as cofactor.

In terms of biological role, mediates the homing of a group I intron in the ribosomal DNA. Makes a four-base staggered cut in its ribosomal DNA target sequence. The sequence is that of Intron-encoded endonuclease I-PpoI from Physarum polycephalum (Slime mold).